Here is a 182-residue protein sequence, read N- to C-terminus: MNLSAKTVVVIAIGAALYGIGGLPMFGIPVFANTTLKPAMAVLALFSVLFGPLVGFLVGFIGHWVTDLFAGWGVWLTWVLGSGIVGLIIGLFPSLTRNRLEKGEFNLKDFSLFVVLALLGNVFGYGCSAFLDTILYAEPFTKVFTQLTIIASGNTVLIAIVGYFILKSVAKRNKQSRNLTEA.

The next 5 helical transmembrane spans lie at 8–28, 41–61, 72–92, 110–130, and 146–166; these read VVVI…MFGI, AVLA…VGFI, WGVW…IGLF, FSLF…CSAF, and QLTI…YFIL.

It belongs to the UPF0397 family.

It localises to the cell membrane. In Vibrio vulnificus (strain CMCP6), this protein is UPF0397 protein VV2_1534.